Consider the following 397-residue polypeptide: Mannan endo-1,4-beta-mannosidase 1 (397 aa).

An N-terminal signal peptide occupies residues 1-23 (MSYARRSCICGLFLLFLALVCEA). Substrate contacts are provided by Trp83 and Asn198. The active-site Proton donor is Glu199. Tyr276 is a binding site for substrate. The Nucleophile role is filled by Glu316. Trp354 lines the substrate pocket.

The protein belongs to the glycosyl hydrolase 5 (cellulase A) family.

Its subcellular location is the secreted. The enzyme catalyses Random hydrolysis of (1-&gt;4)-beta-D-mannosidic linkages in mannans, galactomannans and glucomannans.. The sequence is that of Mannan endo-1,4-beta-mannosidase 1 (MAN1) from Solanum lycopersicum (Tomato).